A 183-amino-acid chain; its full sequence is Peptide deformylase (183 aa).

Residues C110 and H153 each coordinate Fe cation. The active site involves E154. H157 contacts Fe cation.

It belongs to the polypeptide deformylase family. The cofactor is Fe(2+).

It carries out the reaction N-terminal N-formyl-L-methionyl-[peptide] + H2O = N-terminal L-methionyl-[peptide] + formate. Its function is as follows. Removes the formyl group from the N-terminal Met of newly synthesized proteins. Requires at least a dipeptide for an efficient rate of reaction. N-terminal L-methionine is a prerequisite for activity but the enzyme has broad specificity at other positions. The chain is Peptide deformylase from Listeria welshimeri serovar 6b (strain ATCC 35897 / DSM 20650 / CCUG 15529 / CIP 8149 / NCTC 11857 / SLCC 5334 / V8).